Here is a 292-residue protein sequence, read N- to C-terminus: Ribosomal protein L11 methyltransferase (292 aa).

Residues T145, G166, D188, and N229 each coordinate S-adenosyl-L-methionine.

It belongs to the methyltransferase superfamily. PrmA family.

Its subcellular location is the cytoplasm. The catalysed reaction is L-lysyl-[protein] + 3 S-adenosyl-L-methionine = N(6),N(6),N(6)-trimethyl-L-lysyl-[protein] + 3 S-adenosyl-L-homocysteine + 3 H(+). In terms of biological role, methylates ribosomal protein L11. The protein is Ribosomal protein L11 methyltransferase of Nitrosococcus oceani (strain ATCC 19707 / BCRC 17464 / JCM 30415 / NCIMB 11848 / C-107).